A 408-amino-acid polypeptide reads, in one-letter code: Peptidase T (408 aa).

His79 is a Zn(2+) binding site. Asp81 is an active-site residue. Residue Asp139 participates in Zn(2+) binding. The Proton acceptor role is filled by Glu173. Zn(2+) contacts are provided by Glu174, Asp196, and His378.

Belongs to the peptidase M20B family. Zn(2+) is required as a cofactor.

It localises to the cytoplasm. The catalysed reaction is Release of the N-terminal residue from a tripeptide.. Cleaves the N-terminal amino acid of tripeptides. The sequence is that of Peptidase T from Shouchella clausii (strain KSM-K16) (Alkalihalobacillus clausii).